Consider the following 380-residue polypeptide: Glucose-1-phosphate adenylyltransferase (380 aa).

Residues Gly164, 179–180, and Ser190 contribute to the alpha-D-glucose 1-phosphate site; that span reads EK.

The protein belongs to the bacterial/plant glucose-1-phosphate adenylyltransferase family. In terms of assembly, homotetramer.

The catalysed reaction is alpha-D-glucose 1-phosphate + ATP + H(+) = ADP-alpha-D-glucose + diphosphate. The protein operates within glycan biosynthesis; glycogen biosynthesis. Involved in the biosynthesis of ADP-glucose, a building block required for the elongation reactions to produce glycogen. Catalyzes the reaction between ATP and alpha-D-glucose 1-phosphate (G1P) to produce pyrophosphate and ADP-Glc. The sequence is that of Glucose-1-phosphate adenylyltransferase from Ligilactobacillus salivarius (strain UCC118) (Lactobacillus salivarius).